Reading from the N-terminus, the 99-residue chain is UPF0235 protein ASA_3628 (99 aa).

It belongs to the UPF0235 family.

In Aeromonas salmonicida (strain A449), this protein is UPF0235 protein ASA_3628.